The following is a 292-amino-acid chain: Proteasome subunit beta 2 (292 aa).

Positions 1–59 (MTVDRAPRITDGDTRLSFGSNLSSFSEYLRVHAPEHLPQNRFADTGGVVMGGGDVAPHG) are cleaved as a propeptide — removed in mature form; by autocatalysis. Thr60 serves as the catalytic Nucleophile.

Belongs to the peptidase T1B family. The 20S proteasome core is composed of 14 alpha and 14 beta subunits that assemble into four stacked heptameric rings, resulting in a barrel-shaped structure. The two inner rings, each composed of seven catalytic beta subunits, are sandwiched by two outer rings, each composed of seven alpha subunits. All four combinations of alpha- and beta-subunits (beta2-alpha1, beta2-alpha2, beta1-alpha2 and beta1-alpha1) yield fully assembled and proteolytically active proteasomes. The catalytic chamber with the active sites is on the inside of the barrel. Has probably a gated structure, the ends of the cylinder being occluded by the N-termini of the alpha-subunits. Is likely capped by the proteasome-associated ATPase, ARC.

The protein resides in the cytoplasm. It carries out the reaction Cleavage of peptide bonds with very broad specificity.. It participates in protein degradation; proteasomal Pup-dependent pathway. Its activity is regulated as follows. The formation of the proteasomal ATPase ARC-20S proteasome complex, likely via the docking of the C-termini of ARC into the intersubunit pockets in the alpha-rings, may trigger opening of the gate for substrate entry. Interconversion between the open-gate and close-gate conformations leads to a dynamic regulation of the 20S proteasome proteolysis activity. In terms of biological role, component of the proteasome core, a large protease complex with broad specificity involved in protein degradation. The R.erythropolis proteasomes are able to cleave oligopeptides after Tyr, Phe and Leu, very poorly after Arg but not after Glu. Thus, displays chymotrypsin-like activity, low trypsin-like activity but no caspase-like activity. In Rhodococcus erythropolis (Arthrobacter picolinophilus), this protein is Proteasome subunit beta 2.